A 253-amino-acid polypeptide reads, in one-letter code: TCF3 fusion partner (253 aa).

2 disordered regions span residues 49–72 (SGGL…GRRR) and 142–211 (DEGS…PELA). At serine 167 the chain carries Phosphoserine. Positions 170–181 (RRTPAPPEPGSP) are enriched in pro residues. A Phosphothreonine modification is found at threonine 172. Residues serine 180 and serine 188 each carry the phosphoserine modification. Threonine 207 is modified (phosphothreonine). Residue lysine 216 forms a Glycyl lysine isopeptide (Lys-Gly) (interchain with G-Cter in SUMO2) linkage. The segment at 234 to 253 (VSRGPDKLLPYPTLASPASD) is disordered. Serine 249 and serine 252 each carry phosphoserine.

Interacts with NOL3; translocates NOL3 into the nucleus and negatively regulated TFPT-induced cell death. Component of the chromatin remodeling INO80 complex; specifically part of a complex module associated with the N-terminus of INO80.

The protein localises to the nucleus. Appears to promote apoptosis in a p53/TP53-independent manner. Its function is as follows. Putative regulatory component of the chromatin remodeling INO80 complex which is involved in transcriptional regulation, DNA replication and probably DNA repair. This Homo sapiens (Human) protein is TCF3 fusion partner (TFPT).